Consider the following 216-residue polypeptide: Probable nicotinate-nucleotide adenylyltransferase (216 aa).

It belongs to the NadD family.

It catalyses the reaction nicotinate beta-D-ribonucleotide + ATP + H(+) = deamido-NAD(+) + diphosphate. The protein operates within cofactor biosynthesis; NAD(+) biosynthesis; deamido-NAD(+) from nicotinate D-ribonucleotide: step 1/1. In terms of biological role, catalyzes the reversible adenylation of nicotinate mononucleotide (NaMN) to nicotinic acid adenine dinucleotide (NaAD). The protein is Probable nicotinate-nucleotide adenylyltransferase of Maridesulfovibrio salexigens (strain ATCC 14822 / DSM 2638 / NCIMB 8403 / VKM B-1763) (Desulfovibrio salexigens).